Consider the following 246-residue polypeptide: UDP-N-acetyl-D-mannosaminuronic acid transferase (246 aa).

This sequence belongs to the glycosyltransferase 26 family.

The catalysed reaction is UDP-N-acetyl-alpha-D-mannosaminouronate + N-acetyl-alpha-D-glucosaminyl-di-trans,octa-cis-undecaprenyl diphosphate = beta-D-ManNAcA-(1-&gt;4)-alpha-D-GlcNAc-di-trans,octa-cis-undecaprenyl diphosphate + UDP + H(+). The protein operates within bacterial outer membrane biogenesis; enterobacterial common antigen biosynthesis. Functionally, catalyzes the synthesis of Und-PP-GlcNAc-ManNAcA (Lipid II), the second lipid-linked intermediate involved in enterobacterial common antigen (ECA) synthesis. This chain is UDP-N-acetyl-D-mannosaminuronic acid transferase, found in Salmonella arizonae (strain ATCC BAA-731 / CDC346-86 / RSK2980).